The primary structure comprises 558 residues: DALR anticodon-binding domain-containing protein 3 (558 aa).

Positions 213–240 (KALENSAYRDRETEKGKRRSRGEEIEGE) are disordered.

The chain is DALR anticodon-binding domain-containing protein 3 (dalrd3) from Danio rerio (Zebrafish).